The sequence spans 303 residues: Bifunctional protein FolD (303 aa).

NADP(+) is bound by residues 165–167 (GRS), S190, and I231.

Belongs to the tetrahydrofolate dehydrogenase/cyclohydrolase family. Homodimer.

It catalyses the reaction (6R)-5,10-methylene-5,6,7,8-tetrahydrofolate + NADP(+) = (6R)-5,10-methenyltetrahydrofolate + NADPH. The catalysed reaction is (6R)-5,10-methenyltetrahydrofolate + H2O = (6R)-10-formyltetrahydrofolate + H(+). It functions in the pathway one-carbon metabolism; tetrahydrofolate interconversion. Catalyzes the oxidation of 5,10-methylenetetrahydrofolate to 5,10-methenyltetrahydrofolate and then the hydrolysis of 5,10-methenyltetrahydrofolate to 10-formyltetrahydrofolate. This chain is Bifunctional protein FolD, found in Prochlorococcus marinus (strain NATL2A).